A 34-amino-acid chain; its full sequence is SCVDFQTKCKKDSDCCGKLECSSRWKWCVYPSPF.

Disulfide bonds link Cys-2–Cys-16, Cys-9–Cys-21, and Cys-15–Cys-28.

In terms of tissue distribution, expressed by the venom gland.

It is found in the secreted. This is U2-theraphotoxin-Bs1a from Brachypelma smithi (Mexican red knee tarantula).